A 210-amino-acid polypeptide reads, in one-letter code: Probable peroxygenase 7 (210 aa).

Residues 1-24 (MSHQTVALASKAKSPKPKRGKLDK) form a disordered region. An EF-hand domain is found at 25–60 (EKMTALEKHVSFFDRNKDGTVYPWETYQGFRALGTG). H33 is a binding site for heme. D38, N40, D42, T44, and E49 together coordinate Ca(2+). A Proline-knot motif is present at residues 81–90 (PGKGFSPLFP). S188 carries the phosphoserine modification.

This sequence belongs to the caleosin family. Homodimer. Requires heme b as cofactor. Ca(2+) is required as a cofactor. As to expression, expressed in pollen coat.

Its subcellular location is the secreted. The enzyme catalyses RH + ROOH = ROH + ROH.. Its function is as follows. Probable calcium-binding peroxygenase. May be involved in pollination. The chain is Probable peroxygenase 7 (PXG7) from Arabidopsis thaliana (Mouse-ear cress).